Here is a 64-residue protein sequence, read N- to C-terminus: Putative neurotoxin 4 (64 aa).

An N-terminal signal peptide occupies residues methionine 1–alanine 18.

It belongs to the scolopendra neurotoxin 6 family. In terms of processing, contains 3 disulfide bonds. As to expression, expressed by the venom gland.

The protein localises to the secreted. This Scolopendra mutilans (Chinese red-headed centipede) protein is Putative neurotoxin 4.